Here is a 296-residue protein sequence, read N- to C-terminus: NAD kinase (296 aa).

D72 (proton acceptor) is an active-site residue. NAD(+) contacts are provided by residues 72-73 (DG), 146-147 (ND), R157, K174, D176, 187-192 (TAYALS), and Q247.

The protein belongs to the NAD kinase family. The cofactor is a divalent metal cation.

It localises to the cytoplasm. The catalysed reaction is NAD(+) + ATP = ADP + NADP(+) + H(+). Its function is as follows. Involved in the regulation of the intracellular balance of NAD and NADP, and is a key enzyme in the biosynthesis of NADP. Catalyzes specifically the phosphorylation on 2'-hydroxyl of the adenosine moiety of NAD to yield NADP. This chain is NAD kinase, found in Pseudomonas fluorescens (strain Pf0-1).